A 192-amino-acid chain; its full sequence is Imidazole glycerol phosphate synthase subunit HisH (192 aa).

Positions 1–192 (MIAIIDYGLG…QALKGGFIND (192 aa)) constitute a Glutamine amidotransferase type-1 domain. Residue cysteine 77 is the Nucleophile of the active site. Active-site residues include histidine 169 and glutamate 171.

In terms of assembly, heterodimer of HisH and HisF.

It localises to the cytoplasm. The catalysed reaction is 5-[(5-phospho-1-deoxy-D-ribulos-1-ylimino)methylamino]-1-(5-phospho-beta-D-ribosyl)imidazole-4-carboxamide + L-glutamine = D-erythro-1-(imidazol-4-yl)glycerol 3-phosphate + 5-amino-1-(5-phospho-beta-D-ribosyl)imidazole-4-carboxamide + L-glutamate + H(+). It carries out the reaction L-glutamine + H2O = L-glutamate + NH4(+). Its pathway is amino-acid biosynthesis; L-histidine biosynthesis; L-histidine from 5-phospho-alpha-D-ribose 1-diphosphate: step 5/9. IGPS catalyzes the conversion of PRFAR and glutamine to IGP, AICAR and glutamate. The HisH subunit catalyzes the hydrolysis of glutamine to glutamate and ammonia as part of the synthesis of IGP and AICAR. The resulting ammonia molecule is channeled to the active site of HisF. The chain is Imidazole glycerol phosphate synthase subunit HisH from Staphylococcus epidermidis (strain ATCC 12228 / FDA PCI 1200).